We begin with the raw amino-acid sequence, 96 residues long: Aspartyl/glutamyl-tRNA(Asn/Gln) amidotransferase subunit C (96 aa).

Belongs to the GatC family. In terms of assembly, heterotrimer of A, B and C subunits.

It catalyses the reaction L-glutamyl-tRNA(Gln) + L-glutamine + ATP + H2O = L-glutaminyl-tRNA(Gln) + L-glutamate + ADP + phosphate + H(+). The enzyme catalyses L-aspartyl-tRNA(Asn) + L-glutamine + ATP + H2O = L-asparaginyl-tRNA(Asn) + L-glutamate + ADP + phosphate + 2 H(+). Functionally, allows the formation of correctly charged Asn-tRNA(Asn) or Gln-tRNA(Gln) through the transamidation of misacylated Asp-tRNA(Asn) or Glu-tRNA(Gln) in organisms which lack either or both of asparaginyl-tRNA or glutaminyl-tRNA synthetases. The reaction takes place in the presence of glutamine and ATP through an activated phospho-Asp-tRNA(Asn) or phospho-Glu-tRNA(Gln). The sequence is that of Aspartyl/glutamyl-tRNA(Asn/Gln) amidotransferase subunit C from Exiguobacterium sibiricum (strain DSM 17290 / CCUG 55495 / CIP 109462 / JCM 13490 / 255-15).